The primary structure comprises 613 residues: UvrABC system protein C (613 aa).

Positions 29–107 (DVAGVYKMLG…IKTLKPKYNI (79 aa)) constitute a GIY-YIG domain. Residues 217–252 (KELQRELFDSMRKFSDNLDYESAMVYRDRLQALKSI) form the UVR domain.

Belongs to the UvrC family. As to quaternary structure, interacts with UvrB in an incision complex.

It is found in the cytoplasm. The UvrABC repair system catalyzes the recognition and processing of DNA lesions. UvrC both incises the 5' and 3' sides of the lesion. The N-terminal half is responsible for the 3' incision and the C-terminal half is responsible for the 5' incision. This chain is UvrABC system protein C, found in Anaplasma marginale (strain St. Maries).